The chain runs to 487 residues: Glycogen synthase (487 aa).

Residue Lys19 participates in ADP-alpha-D-glucose binding.

This sequence belongs to the glycosyltransferase 1 family. Bacterial/plant glycogen synthase subfamily.

It carries out the reaction [(1-&gt;4)-alpha-D-glucosyl](n) + ADP-alpha-D-glucose = [(1-&gt;4)-alpha-D-glucosyl](n+1) + ADP + H(+). It functions in the pathway glycan biosynthesis; glycogen biosynthesis. In terms of biological role, synthesizes alpha-1,4-glucan chains using ADP-glucose. This is Glycogen synthase from Moorella thermoacetica (strain ATCC 39073 / JCM 9320).